We begin with the raw amino-acid sequence, 317 residues long: Acetyl-coenzyme A carboxylase carboxyl transferase subunit alpha (317 aa).

The CoA carboxyltransferase C-terminal domain occupies 33–294; sequence NLDDEITRLQ…KKRLLADLAD (262 aa).

Belongs to the AccA family. As to quaternary structure, acetyl-CoA carboxylase is a heterohexamer composed of biotin carboxyl carrier protein (AccB), biotin carboxylase (AccC) and two subunits each of ACCase subunit alpha (AccA) and ACCase subunit beta (AccD).

Its subcellular location is the cytoplasm. The enzyme catalyses N(6)-carboxybiotinyl-L-lysyl-[protein] + acetyl-CoA = N(6)-biotinyl-L-lysyl-[protein] + malonyl-CoA. Its pathway is lipid metabolism; malonyl-CoA biosynthesis; malonyl-CoA from acetyl-CoA: step 1/1. Functionally, component of the acetyl coenzyme A carboxylase (ACC) complex. First, biotin carboxylase catalyzes the carboxylation of biotin on its carrier protein (BCCP) and then the CO(2) group is transferred by the carboxyltransferase to acetyl-CoA to form malonyl-CoA. The sequence is that of Acetyl-coenzyme A carboxylase carboxyl transferase subunit alpha from Histophilus somni (strain 129Pt) (Haemophilus somnus).